The primary structure comprises 453 residues: Septin-10 (453 aa).

The tract at residues Lys-18 to Ser-43 is disordered. Residues Ser-27–Pro-37 show a composition bias toward basic and acidic residues. Residues Gln-62–Glu-328 form the Septin-type G domain. The G1 motif stretch occupies residues Gly-72–Ser-79. GTP is bound by residues Gly-72 to Ser-79, Gly-127, Lys-208 to Glu-216, Gly-262, and Arg-277. Residues Asn-124–Gly-127 are G3 motif. A G4 motif region spans residues Ala-207 to Asp-210. Residues Thr-433 to Met-453 form a disordered region. Basic and acidic residues predominate over residues Leu-441–Met-453.

This sequence belongs to the TRAFAC class TrmE-Era-EngA-EngB-Septin-like GTPase superfamily. Septin GTPase family. As to quaternary structure, septins polymerize into heterooligomeric protein complexes that form filaments, and can associate with cellular membranes, actin filaments and microtubules. GTPase activity is required for filament formation. Interacts with ADGB. In terms of processing, proteolytically cleaved in vitro in a calmodulin-dependent manner.

The protein resides in the cytoplasm. The protein localises to the cytoskeleton. Its subcellular location is the cell projection. It is found in the cilium. It localises to the flagellum. Its function is as follows. Filament-forming cytoskeletal GTPase. May play a role in cytokinesis (Potential). This is Septin-10 from Bos taurus (Bovine).